Here is a 316-residue protein sequence, read N- to C-terminus: Ribosomal RNA small subunit methyltransferase H (316 aa).

Residues 32 to 34 (AGH), aspartate 52, phenylalanine 79, aspartate 106, and glutamine 113 each bind S-adenosyl-L-methionine.

Belongs to the methyltransferase superfamily. RsmH family.

It is found in the cytoplasm. It carries out the reaction cytidine(1402) in 16S rRNA + S-adenosyl-L-methionine = N(4)-methylcytidine(1402) in 16S rRNA + S-adenosyl-L-homocysteine + H(+). In terms of biological role, specifically methylates the N4 position of cytidine in position 1402 (C1402) of 16S rRNA. The sequence is that of Ribosomal RNA small subunit methyltransferase H from Paenibacillus sp. (strain JDR-2).